A 314-amino-acid chain; its full sequence is MRPLTIIGPTGTGKSDSAIEIADRLSSKIAVEIVNADAYQLYRGMDIGTGKVPLAQRRGIPHHQLDVLDVTETATVAGYQRSAAADIEAIASRGALPLLVGGSMLYVQSLLDDWAFPAKDPAIRARWERRLAQVGPARLHADLVRRDPAAAAVIPLNDARRTVRALEVVEITGRPYAASAPRIGSPRWDSAIIGLDCETKVLDERLAARTKAMFDRGLIEEVISLLPCGLARGVTASRALGYAQVMEALKAGADTQALDRARQQTCLATRRYVRRQRSWFRRDRRVRWLDATVSTAAHRTAIIEAVLGAWRRAS.

ATP is bound at residue 8–15 (GPTGTGKS). 10–15 (TGTGKS) contacts substrate.

Belongs to the IPP transferase family. Monomer. Requires Mg(2+) as cofactor.

It carries out the reaction adenosine(37) in tRNA + dimethylallyl diphosphate = N(6)-dimethylallyladenosine(37) in tRNA + diphosphate. Its function is as follows. Catalyzes the transfer of a dimethylallyl group onto the adenine at position 37 in tRNAs that read codons beginning with uridine, leading to the formation of N6-(dimethylallyl)adenosine (i(6)A). This Mycobacterium ulcerans (strain Agy99) protein is tRNA dimethylallyltransferase 2.